The following is an 82-amino-acid chain: Ferredoxin (82 aa).

A 4Fe-4S ferredoxin-type domain is found at Lys3 to Glu31. Residues Cys12, Cys15, Cys18, and Cys62 each contribute to the [4Fe-4S] cluster site.

[4Fe-4S] cluster serves as cofactor.

In terms of biological role, ferredoxins are iron-sulfur proteins that transfer electrons in a wide variety of metabolic reactions. This ferredoxin may act as a phosphodonor to cytochrome P450 BioI. This is Ferredoxin (fer) from Bacillus subtilis (strain 168).